The chain runs to 281 residues: CDAN1-interacting nuclease 1 (281 aa).

Residue T114 is modified to Phosphothreonine.

The protein resides in the nucleus. The protein localises to the cytoplasm. In terms of biological role, plays a role in erythroid cell differentiation. The sequence is that of CDAN1-interacting nuclease 1 from Homo sapiens (Human).